The sequence spans 197 residues: uncharacterized protein (197 aa).

The first 23 residues, 1–23 (MSARAPKELRLALPPCLLNRTFA), serve as a signal peptide directing secretion. N-linked (GlcNAc...) asparagine glycosylation is found at asparagine 19 and asparagine 26. At 24-61 (SPNASGSGNTGARGPGAGGSGTCITQVGQQLFQSFSST) the chain is on the extracellular side. A helical membrane pass occupies residues 62–82 (LVLIVLVTLIFCLIVLSLSTF). Topologically, residues 83–197 (HIHKRRMKKR…EGLLQTVVLS (115 aa)) are cytoplasmic. Residues 94–180 (MQRAQEEYER…SSPQGAHAAS (87 aa)) form a disordered region. 2 stretches are compositionally biased toward basic and acidic residues: residues 96–107 (RAQEEYERDHCS) and 125–136 (HTKETRLERQPR). Over residues 147-161 (SSSSSSSPGLLCQGP) the composition is skewed to low complexity. The segment covering 162–171 (CAPPPPPPAS) has biased composition (pro residues).

The protein resides in the membrane. This is an uncharacterized protein from Macaca fascicularis (Crab-eating macaque).